The chain runs to 268 residues: Tubulin-specific chaperone C (268 aa).

The C-CAP/cofactor C-like domain occupies 98–255 (PAYTTTLKKH…SAFAFEDFDI (158 aa)).

The protein resides in the cytoplasm. It is found in the cytoskeleton. Tubulin-folding protein; involved in the early step of the tubulin folding pathway. This is Tubulin-specific chaperone C (CIN2) from Saccharomyces cerevisiae (strain ATCC 204508 / S288c) (Baker's yeast).